A 124-amino-acid chain; its full sequence is Ribosome-binding factor A (124 aa).

Belongs to the RbfA family. Monomer. Binds 30S ribosomal subunits, but not 50S ribosomal subunits or 70S ribosomes.

The protein localises to the cytoplasm. Functionally, one of several proteins that assist in the late maturation steps of the functional core of the 30S ribosomal subunit. Associates with free 30S ribosomal subunits (but not with 30S subunits that are part of 70S ribosomes or polysomes). Required for efficient processing of 16S rRNA. May interact with the 5'-terminal helix region of 16S rRNA. The protein is Ribosome-binding factor A of Sorangium cellulosum (strain So ce56) (Polyangium cellulosum (strain So ce56)).